Consider the following 303-residue polypeptide: UDP-3-O-acyl-N-acetylglucosamine deacetylase (303 aa).

Residues His78, His237, and Asp241 each contribute to the Zn(2+) site. His264 serves as the catalytic Proton donor.

This sequence belongs to the LpxC family. Requires Zn(2+) as cofactor.

The enzyme catalyses a UDP-3-O-[(3R)-3-hydroxyacyl]-N-acetyl-alpha-D-glucosamine + H2O = a UDP-3-O-[(3R)-3-hydroxyacyl]-alpha-D-glucosamine + acetate. It participates in glycolipid biosynthesis; lipid IV(A) biosynthesis; lipid IV(A) from (3R)-3-hydroxytetradecanoyl-[acyl-carrier-protein] and UDP-N-acetyl-alpha-D-glucosamine: step 2/6. Functionally, catalyzes the hydrolysis of UDP-3-O-myristoyl-N-acetylglucosamine to form UDP-3-O-myristoylglucosamine and acetate, the committed step in lipid A biosynthesis. This Azotobacter vinelandii (strain DJ / ATCC BAA-1303) protein is UDP-3-O-acyl-N-acetylglucosamine deacetylase.